Consider the following 191-residue polypeptide: MAVSNIWQSYSSSNLHWIYPLYTNNCSQNVKSSFTAEILLKRRCNDIQDILNDRMIELLLQGACDPNKQQNYLQGMSPSRKKKTHVKKFLKKQKKSRKPITLEHGCLSGPVTLRFGNFAGIRDLRGTRCPLHGIKHGVHPKPGERCACQQATLFPSPLARFSCDQSAVLGCAASSTRVYDSIADEFSSLYF.

Functionally, not essential for sporulation. In Saccharomyces cerevisiae (strain ATCC 204508 / S288c) (Baker's yeast), this protein is Sporulation-specific protein (SPR6).